Consider the following 1113-residue polypeptide: Protein MGA2 (1113 aa).

The segment at 91–114 (TPLEEEMESNRALKEEEEDEHENK) is disordered. The residue at position 255 (S255) is a Phosphoserine. Composition is skewed to polar residues over residues 344 to 357 (DTTK…SSRR) and 437 to 452 (HIPS…SESF). Disordered regions lie at residues 344 to 376 (DTTK…NNQL) and 437 to 462 (HIPS…NDNP). Residue S467 is modified to Phosphoserine. In terms of domain architecture, IPT/TIG spans 530–610 (PSINRVIPSQ…NENNNDDLPQ (81 aa)). The segment at 658-687 (IVGNDSPDSGTNGNSCSKSTGPSPNQHSMN) is disordered. The span at 663 to 687 (SPDSGTNGNSCSKSTGPSPNQHSMN) shows a compositional bias: polar residues. ANK repeat units lie at residues 719 to 748 (LGRT…RVND) and 752 to 781 (FGLT…NYSL). Residues 1037–1054 (MLIFFWIPLTLLLLTWFI) traverse the membrane as a helical segment.

The protein localises to the membrane. The polypeptide is Protein MGA2 (MGA2) (Saccharomyces cerevisiae (strain ATCC 204508 / S288c) (Baker's yeast)).